The primary structure comprises 104 residues: Iron-sulfur cluster assembly protein CyaY (104 aa).

It belongs to the frataxin family.

Functionally, involved in iron-sulfur (Fe-S) cluster assembly. May act as a regulator of Fe-S biogenesis. The sequence is that of Iron-sulfur cluster assembly protein CyaY from Aliivibrio salmonicida (strain LFI1238) (Vibrio salmonicida (strain LFI1238)).